A 395-amino-acid chain; its full sequence is Beta-1,4-galactosyltransferase 3 (395 aa).

Residues 1 to 10 are Cytoplasmic-facing; that stretch reads MLRRLLERPC. A helical; Signal-anchor for type II membrane protein transmembrane segment spans residues 11 to 31; that stretch reads TLALLVGSQLAVMMYLSLGGF. Topologically, residues 32 to 395 are lumenal; that stretch reads RSLSALFGRD…ANHTAPHGSH (364 aa). The N-linked (GlcNAc...) asparagine glycan is linked to N57. C79 and C121 form a disulfide bridge. UDP-alpha-D-galactose contacts are provided by residues 132 to 136, 171 to 173, 198 to 199, Y228, and W260; these read PHRAR, FNR, and VD. Cysteines 192 and 211 form a disulfide. A Mn(2+)-binding site is contributed by D199. 262–265 is a binding site for N-acetyl-D-glucosamine; it reads GEDD. A Mn(2+)-binding site is contributed by H293. 293–295 is a UDP-alpha-D-galactose binding site; sequence HRG. R305 provides a ligand contact to N-acetyl-D-glucosamine. N-linked (GlcNAc...) asparagine glycosylation is found at N339 and N387. Residues 341–395 form a disordered region; the sequence is TADIGTDPRGPRAPSGPRYPPGSSQAFRQEMLQRRPPARPGPLPTANHTAPHGSH.

This sequence belongs to the glycosyltransferase 7 family. The cofactor is Mn(2+).

It localises to the golgi apparatus. The protein resides in the golgi stack membrane. It catalyses the reaction an N-acetyl-beta-D-glucosaminyl derivative + UDP-alpha-D-galactose = a beta-D-galactosyl-(1-&gt;4)-N-acetyl-beta-D-glucosaminyl derivative + UDP + H(+). The enzyme catalyses N-acetyl-D-glucosamine + UDP-alpha-D-galactose = beta-D-galactosyl-(1-&gt;4)-N-acetyl-D-glucosamine + UDP + H(+). It carries out the reaction a beta-D-GlcNAc-(1-&gt;3)-beta-D-Gal-(1-&gt;4)-beta-D-Glc-(1&lt;-&gt;1)-Cer(d18:1(4E)) + UDP-alpha-D-galactose = a neolactoside nLc4Cer(d18:1(4E)) + UDP + H(+). The catalysed reaction is a beta-D-glucosylceramide + UDP-alpha-D-galactose = a beta-D-galactosyl-(1-&gt;4)-beta-D-glucosyl-(1&lt;-&gt;1)-ceramide + UDP + H(+). It catalyses the reaction a neolactoside IV(3)-beta-GlcNAc-nLc4Cer + UDP-alpha-D-galactose = a neolactoside nLc6Cer + UDP + H(+). It participates in protein modification; protein glycosylation. Responsible for the synthesis of complex-type N-linked oligosaccharides in many glycoproteins as well as the carbohydrate moieties of glycolipids. In Cricetulus griseus (Chinese hamster), this protein is Beta-1,4-galactosyltransferase 3 (B4GALT3).